The sequence spans 594 residues: CRISPR-associated DNA-binding protein Cas12m (594 aa).

The segment at Met-1–Glu-85 is recognition domain (REC1-N). The recognition domain (REC2) stretch occupies residues Ser-86 to Lys-153. Residues Gln-154 to Gly-211 are recognition domain (REC1-C). Positions Lys-212–Ile-314 are wedge domain (WED). Positions Leu-315–Thr-329 are linker. A ruvC-I region spans residues Ala-330–Pro-540. The tract at residues Ala-541 to Asp-575 is target nucleic-acid binding (TNB). Zn(2+)-binding residues include Cys-548, Cys-551, Cys-567, and Cys-570. The ruvC-II stretch occupies residues Gln-576 to Lys-594. Asp-577 contributes to the Mg(2+) binding site.

Belongs to the CRISPR-associated DNA-binding protein Cas12m family. The cofactor is Mg(2+). Requires Zn(2+) as cofactor.

Functionally, CRISPR (clustered regularly interspaced short palindromic repeat), is an adaptive immune system that provides protection against mobile genetic elements (viruses, transposable elements and conjugative plasmids). CRISPR clusters contain sequences complementary to antecedent mobile elements and target invading nucleic acids. CRISPR clusters are transcribed and processed into CRISPR RNA (crRNA). Recognizes a short motif in the CRISPR repeat sequences (the 5' PAM or protospacer adjacent motif, 5'-C/TCN-3' in this organism) to help distinguish self versus nonself, as targets within the bacterial CRISPR locus do not have PAMs. Upon expression in E.coli as a CRISPR locus inhibits plasmid propagation when targeted to regions essential for plasmid propagation (replication origin but not a selectable marker), probably by inhibiting transcription. Cas12m-crRNA binds DNA in a PAM-dependent, crRNA-guided fashion. Upon expression in E.coli as a CRISPR region preferentially binds to its associated crRNA. Probably required for pre-crRNA processing to mature crRNA. The polypeptide is CRISPR-associated DNA-binding protein Cas12m (Thermanaerosceptrum fracticalcis).